A 515-amino-acid chain; its full sequence is Maturase K (515 aa).

The protein belongs to the intron maturase 2 family. MatK subfamily.

It localises to the plastid. The protein localises to the chloroplast. In terms of biological role, usually encoded in the trnK tRNA gene intron. Probably assists in splicing its own and other chloroplast group II introns. The chain is Maturase K from Pinus patula (Mexican weeping pine).